Reading from the N-terminus, the 188-residue chain is Peptidyl-tRNA hydrolase (188 aa).

Position 14 (Tyr14) interacts with tRNA. Residue His19 is the Proton acceptor of the active site. 3 residues coordinate tRNA: Tyr64, Asn66, and Asn112.

Belongs to the PTH family. Monomer.

The protein localises to the cytoplasm. The catalysed reaction is an N-acyl-L-alpha-aminoacyl-tRNA + H2O = an N-acyl-L-amino acid + a tRNA + H(+). Its function is as follows. Hydrolyzes ribosome-free peptidyl-tRNAs (with 1 or more amino acids incorporated), which drop off the ribosome during protein synthesis, or as a result of ribosome stalling. Catalyzes the release of premature peptidyl moieties from peptidyl-tRNA molecules trapped in stalled 50S ribosomal subunits, and thus maintains levels of free tRNAs and 50S ribosomes. The protein is Peptidyl-tRNA hydrolase of Bacillus licheniformis (strain ATCC 14580 / DSM 13 / JCM 2505 / CCUG 7422 / NBRC 12200 / NCIMB 9375 / NCTC 10341 / NRRL NRS-1264 / Gibson 46).